Consider the following 297-residue polypeptide: Light-independent protochlorophyllide reductase iron-sulfur ATP-binding protein (297 aa).

ATP contacts are provided by residues glycine 41 to threonine 46 and lysine 70. Serine 45 provides a ligand contact to Mg(2+). The [4Fe-4S] cluster site is built by cysteine 126 and cysteine 160. ATP is bound by residues asparagine 211–arginine 212 and proline 235–leucine 237.

This sequence belongs to the NifH/BchL/ChlL family. In terms of assembly, homodimer. Protochlorophyllide reductase is composed of three subunits; BchL, BchN and BchB. [4Fe-4S] cluster serves as cofactor.

It catalyses the reaction chlorophyllide a + oxidized 2[4Fe-4S]-[ferredoxin] + 2 ADP + 2 phosphate = protochlorophyllide a + reduced 2[4Fe-4S]-[ferredoxin] + 2 ATP + 2 H2O. It participates in porphyrin-containing compound metabolism; bacteriochlorophyll biosynthesis (light-independent). Functionally, component of the dark-operative protochlorophyllide reductase (DPOR) that uses Mg-ATP and reduced ferredoxin to reduce ring D of protochlorophyllide (Pchlide) to form chlorophyllide a (Chlide). This reaction is light-independent. The L component serves as a unique electron donor to the NB-component of the complex, and binds Mg-ATP. The polypeptide is Light-independent protochlorophyllide reductase iron-sulfur ATP-binding protein (Cereibacter sphaeroides (strain KD131 / KCTC 12085) (Rhodobacter sphaeroides)).